The sequence spans 35 residues: Phospholipase A2 neuwieditoxin-1 (35 aa).

Ca(2+) is bound by residues Tyr27, Gly29, and Gly31.

The protein belongs to the phospholipase A2 family. Group II subfamily. D49 sub-subfamily. In terms of assembly, dimer. It depends on Ca(2+) as a cofactor. As to expression, expressed by the venom gland.

It localises to the secreted. It carries out the reaction a 1,2-diacyl-sn-glycero-3-phosphocholine + H2O = a 1-acyl-sn-glycero-3-phosphocholine + a fatty acid + H(+). Functionally, snake venom phospholipase A2 (PLA2) that shows presynaptic neurotoxicity. 10 ug/ml of this protein produce complete neuromuscular blockade up to 80 minutes, without inhibiting the responses to acetylcholine (ACh) and potassium chloride (KCl). In addition, it produces a calcium-dependent blockade of acetylcholine release and causes appearance of giant miniature end-plate potentials. PLA2 catalyzes the calcium-dependent hydrolysis of the 2-acyl groups in 3-sn-phosphoglycerides. This Bothrops pauloensis (Neuwied's lancehead) protein is Phospholipase A2 neuwieditoxin-1.